The primary structure comprises 356 residues: Protein disulfide isomerase crld-1 (356 aa).

The first 17 residues, methionine 1–glutamine 17, serve as a signal peptide directing secretion. At lysine 18–glutamine 299 the chain is on the lumenal side. The short motif at cysteine 27–cysteine 30 is the CXXC element. The cysteines at positions 27 and 30 are disulfide-linked. The N-linked (GlcNAc...) asparagine glycan is linked to asparagine 122. An EGF-like 1 domain is found at glycine 150–arginine 188. Intrachain disulfides connect cysteine 158/cysteine 176, cysteine 178/cysteine 187, cysteine 245/cysteine 258, cysteine 251/cysteine 267, and cysteine 269/cysteine 281. In terms of domain architecture, EGF-like 2; calcium-binding spans aspartate 241–glutamine 282. Residue asparagine 247 is glycosylated (N-linked (GlcNAc...) asparagine). Residues leucine 300–tryptophan 317 traverse the membrane as a helical segment. Over histidine 318–proline 321 the chain is Cytoplasmic. Residues valine 322–valine 341 traverse the membrane as a helical segment. Topologically, residues asparagine 342–tyrosine 356 are lumenal.

This sequence belongs to the CRELD family. In terms of assembly, interacts with unc-29. As to expression, isoforms a: Widely expressed in tissues including body wall muscles, neurons, pharynx, hypodermis, seam cells, intestine and gonad. Isoform b: Widely expressed in tissues including body wall muscles, neurons, pharynx, hypodermis, seam cells, intestine and gonad.

It is found in the endoplasmic reticulum membrane. The protein resides in the endoplasmic reticulum lumen. The catalysed reaction is Catalyzes the rearrangement of -S-S- bonds in proteins.. Its function is as follows. Protein disulfide isomerase which associates with the unc-29 subunit of levamisole-sensitive nicotinic acetylcholine receptors (L-nAChR) to promote L-nAChR assembly in the endoplasmic reticulum at neuromuscular junctions. In terms of biological role, promotes L-nAChR assembly in the endoplasmic reticulum at neuromuscular junctions. The protein is Protein disulfide isomerase crld-1 of Caenorhabditis elegans.